Reading from the N-terminus, the 108-residue chain is MSTGPSEVIRIRMEAYDHAVLDQSARDIVDTVKATASIVHGPIPLPTRIERYTVLSSPFVNKKARQQYEIRTHKRLVDIVQASAKTIEALNKLSLPAGVDIKIKASAR.

It belongs to the universal ribosomal protein uS10 family. Part of the 30S ribosomal subunit.

In terms of biological role, involved in the binding of tRNA to the ribosomes. The polypeptide is Small ribosomal subunit protein uS10 (Rhodopirellula baltica (strain DSM 10527 / NCIMB 13988 / SH1)).